The sequence spans 172 residues: Spermidine/spermine N(1)-acetyltransferase (172 aa).

The N-acetyltransferase domain occupies 3-172 (VKMKKCSRED…TDLIMAKTLI (170 aa)). Residues 96–98 (IYI), 105–109 (HGLGK), and 135–137 (NEN) each bind acetyl-CoA. The Proton donor role is filled by Tyr142. Lys144 contacts acetyl-CoA.

This sequence belongs to the acetyltransferase family. In terms of assembly, monomer.

It carries out the reaction an alkane-alpha,omega-diamine + acetyl-CoA = an N-acetylalkane-alpha,omega-diamine + CoA + H(+). Its function is as follows. Involved in the protection against polyamine toxicity by regulating their concentration. Could also be involved in the negative control of sporulation as well as production of degradative enzymes such as alpha-amylase, levansucrase and alkaline phosphatase. Catalyzes the transfer of an acetyl group from acetyl coenzyme A (AcCoA) to an acceptor substrate and releases both CoA and the acetylated product. It possesses N1-acetyltransferase activity toward polyamine substrates including spermidine, spermine, aminopropylcadaverine, norspermidine, homospermidine, N(8)-acetylspermidine, diaminopropane and agmatine. This chain is Spermidine/spermine N(1)-acetyltransferase, found in Bacillus subtilis (strain 168).